The chain runs to 374 residues: F-box/LRR-repeat protein 8 (374 aa).

The F-box domain maps to 2 to 48 (AEPGEQLPEEVLALIFRHLPLPDRAAAARVCRAWAAAATCSAVWHDT).

Directly interacts with SKP1 and CUL1.

In terms of biological role, substrate-recognition component of the SCF (SKP1-CUL1-F-box protein)-type E3 ubiquitin ligase complex. The polypeptide is F-box/LRR-repeat protein 8 (FBXL8) (Bos taurus (Bovine)).